A 1450-amino-acid polypeptide reads, in one-letter code: DNA-directed RNA polymerase RPB1 homolog (1450 aa).

Belongs to the RNA polymerase beta' chain family. In terms of assembly, part of the viral DNA-directed RNA polymerase that consists of 8 polII-like subunits (RPB1, RPB2, RPB3, RPB5, RPB6, RPB7, RPB9, RPB10), a capping enzyme and a termination factor.

It localises to the virion. The enzyme catalyses RNA(n) + a ribonucleoside 5'-triphosphate = RNA(n+1) + diphosphate. Its function is as follows. Catalytic component of the DNA-directed RNA polymerase (RNAP) that catalyzes the transcription in the cytoplasm of viral DNA into RNA using the four ribonucleoside triphosphates as substrates. Forms the polymerase active center together with RPB2. Part of the core element with the central large cleft, the clamp element that moves to open and close the cleft and the jaws that are thought to grab the incoming DNA template. This is DNA-directed RNA polymerase RPB1 homolog from African swine fever virus (isolate Tick/South Africa/Pretoriuskop Pr4/1996) (ASFV).